The sequence spans 233 residues: VIGGDECNINEHPFLVLVYYDEYQCGGTLINEEWVLTAAHCDGENMEIHLGMHSKKVPNKDRRRRVPKEKFFCDSSKNYTKWNKDIMLIRLNRPVRKSAHIAPLSLPSSPPSVGSVCRIMGWGTISPTEETYPDVPHCANINLLDYEVCRAAYPELPATSRTLCAGILEGGKDSCGGDSGGPLICNGQFQGIVSWGGDPCAQPHEPGSYTNVFDHLDWIKGIIAGNTDATCPL.

The Peptidase S1 domain occupies 1–224; the sequence is VIGGDECNIN…HLDWIKGIIA (224 aa). Cystine bridges form between Cys-7/Cys-138, Cys-25/Cys-41, Cys-73/Cys-231, Cys-117/Cys-185, Cys-149/Cys-164, and Cys-175/Cys-200. The active-site Charge relay system is the His-40. A glycan (N-linked (GlcNAc...) asparagine) is linked at Asn-78. Catalysis depends on Asp-85, which acts as the Charge relay system. Ser-179 functions as the Charge relay system in the catalytic mechanism.

This sequence belongs to the peptidase S1 family. Snake venom subfamily. Monomer. In terms of tissue distribution, expressed by the venom gland.

It localises to the secreted. Its function is as follows. Thrombin-like snake venom serine protease that clots rabbit fibrinogen. Only the beta chain of fibrinogen (FGB) is cleaved, releasing fibrinopeptide B. Human and bovine fibrinogen are unaffected. Also cleaves Met-Lys and Arg-Ser bonds in heat-denatured bovine plasma kininogen to release Lys-bradykinin. This Protobothrops elegans (Elegant pitviper) protein is Thrombin-like enzyme elegaxobin-2.